Here is an 82-residue protein sequence, read N- to C-terminus: Small ribosomal subunit protein uS17 (82 aa).

The protein belongs to the universal ribosomal protein uS17 family. In terms of assembly, part of the 30S ribosomal subunit.

Its function is as follows. One of the primary rRNA binding proteins, it binds specifically to the 5'-end of 16S ribosomal RNA. This chain is Small ribosomal subunit protein uS17, found in Thermosynechococcus vestitus (strain NIES-2133 / IAM M-273 / BP-1).